The following is a 119-amino-acid chain: Holo-[acyl-carrier-protein] synthase (119 aa).

The Mg(2+) site is built by Asp-6 and Glu-51.

It belongs to the P-Pant transferase superfamily. AcpS family. Mg(2+) is required as a cofactor.

The protein resides in the cytoplasm. The catalysed reaction is apo-[ACP] + CoA = holo-[ACP] + adenosine 3',5'-bisphosphate + H(+). In terms of biological role, transfers the 4'-phosphopantetheine moiety from coenzyme A to a Ser of acyl-carrier-protein. This is Holo-[acyl-carrier-protein] synthase from Sulfurovum sp. (strain NBC37-1).